We begin with the raw amino-acid sequence, 410 residues long: Kynureninase (410 aa).

Pyridoxal 5'-phosphate-binding positions include Thr-108, Ser-109, Phe-135–Asp-138, Thr-176, Asp-205, His-208, and Tyr-230. N6-(pyridoxal phosphate)lysine is present on Lys-231. Pyridoxal 5'-phosphate is bound by residues Trp-260 and Thr-286.

It belongs to the kynureninase family. Homodimer. It depends on pyridoxal 5'-phosphate as a cofactor.

The enzyme catalyses L-kynurenine + H2O = anthranilate + L-alanine + H(+). It carries out the reaction 3-hydroxy-L-kynurenine + H2O = 3-hydroxyanthranilate + L-alanine + H(+). The protein operates within amino-acid degradation; L-kynurenine degradation; L-alanine and anthranilate from L-kynurenine: step 1/1. Its pathway is cofactor biosynthesis; NAD(+) biosynthesis; quinolinate from L-kynurenine: step 2/3. Its function is as follows. Catalyzes the cleavage of L-kynurenine (L-Kyn) and L-3-hydroxykynurenine (L-3OHKyn) into anthranilic acid (AA) and 3-hydroxyanthranilic acid (3-OHAA), respectively. This is Kynureninase from Deinococcus radiodurans (strain ATCC 13939 / DSM 20539 / JCM 16871 / CCUG 27074 / LMG 4051 / NBRC 15346 / NCIMB 9279 / VKM B-1422 / R1).